The sequence spans 169 residues: ATP synthase subunit b (169 aa).

The chain crosses the membrane as a helical span at residues 11 to 31 (KLPLGNMLFIIISFLVLMVIL).

Belongs to the ATPase B chain family. In terms of assembly, F-type ATPases have 2 components, F(1) - the catalytic core - and F(0) - the membrane proton channel. F(1) has five subunits: alpha(3), beta(3), gamma(1), delta(1), epsilon(1). F(0) has three main subunits: a(1), b(2) and c(10-14). The alpha and beta chains form an alternating ring which encloses part of the gamma chain. F(1) is attached to F(0) by a central stalk formed by the gamma and epsilon chains, while a peripheral stalk is formed by the delta and b chains.

The protein localises to the cell membrane. F(1)F(0) ATP synthase produces ATP from ADP in the presence of a proton or sodium gradient. F-type ATPases consist of two structural domains, F(1) containing the extramembraneous catalytic core and F(0) containing the membrane proton channel, linked together by a central stalk and a peripheral stalk. During catalysis, ATP synthesis in the catalytic domain of F(1) is coupled via a rotary mechanism of the central stalk subunits to proton translocation. In terms of biological role, component of the F(0) channel, it forms part of the peripheral stalk, linking F(1) to F(0). The sequence is that of ATP synthase subunit b from Leuconostoc citreum (strain KM20).